A 109-amino-acid polypeptide reads, in one-letter code: N-cym protein (109 aa).

Interacts with MYCN and GSK3B. In terms of tissue distribution, expressed in the neuronal cells of the cerebrum and cerebellum, spermatocytes of the testis, pancreatic cells and also the heart. Expressed in both primary and metastatic neuroblastomas and in thyroid tumors (at protein level). Expression is associated with poor prognosis in neuroblastoma. Expressed in the fetal brain, lung, liver and kidney at varying low levels.

The protein localises to the cytoplasm. It is found in the nucleus. Its function is as follows. Regulates stability of MYCN in neuroblastoma cells by inhibiting GSK3B-mediated MYCN phosphorylation. Inhibits GSK3B activity by promoting its phosphorylation at 'Ser-9'. This chain is N-cym protein (MYCNOS), found in Homo sapiens (Human).